The sequence spans 320 residues: Acetyl-coenzyme A carboxylase carboxyl transferase subunit alpha (320 aa).

In terms of domain architecture, CoA carboxyltransferase C-terminal spans 42-295 (IEDKAKAALH…GDAIAQAFSD (254 aa)).

The protein belongs to the AccA family. In terms of assembly, acetyl-CoA carboxylase is a heterohexamer composed of biotin carboxyl carrier protein (AccB), biotin carboxylase (AccC) and two subunits each of ACCase subunit alpha (AccA) and ACCase subunit beta (AccD).

The protein resides in the cytoplasm. The enzyme catalyses N(6)-carboxybiotinyl-L-lysyl-[protein] + acetyl-CoA = N(6)-biotinyl-L-lysyl-[protein] + malonyl-CoA. It functions in the pathway lipid metabolism; malonyl-CoA biosynthesis; malonyl-CoA from acetyl-CoA: step 1/1. Component of the acetyl coenzyme A carboxylase (ACC) complex. First, biotin carboxylase catalyzes the carboxylation of biotin on its carrier protein (BCCP) and then the CO(2) group is transferred by the carboxyltransferase to acetyl-CoA to form malonyl-CoA. The protein is Acetyl-coenzyme A carboxylase carboxyl transferase subunit alpha of Afipia carboxidovorans (strain ATCC 49405 / DSM 1227 / KCTC 32145 / OM5) (Oligotropha carboxidovorans).